The following is a 421-amino-acid chain: Stemmadenine O-acetyltransferase (421 aa).

Residues 1–21 (MAPQMQILSEELIQPSSPTPQ) form a disordered region. Active-site proton acceptor residues include H160 and D362.

The protein belongs to the plant acyltransferase family. As to quaternary structure, monomer. As to expression, expressed in leaf epidermis.

It carries out the reaction 15alpha-stemmadenine + acetyl-CoA = O-acetyl-15alpha-stemmadenine + CoA. The protein operates within alkaloid biosynthesis. Functionally, component of iboga and aspidosperma monoterpenoid indole alkaloids (MIAs, e.g. tabersonine and catharanthine) biosynthesis pathway from 19E-geissoschizine. Acetyltransferase that catalyzes the formation of O-acetylstemmadenine from stemmadenine. In Catharanthus roseus (Madagascar periwinkle), this protein is Stemmadenine O-acetyltransferase.